A 213-amino-acid polypeptide reads, in one-letter code: Orotate phosphoribosyltransferase (213 aa).

Lys-26 provides a ligand contact to 5-phospho-alpha-D-ribose 1-diphosphate. 34 to 35 is a binding site for orotate; that stretch reads FF. Residues 72-73, Arg-99, Lys-100, Lys-103, His-105, and 124-132 each bind 5-phospho-alpha-D-ribose 1-diphosphate; these read YK and DDVITAGTA. Orotate is bound by residues Thr-128 and Arg-156.

It belongs to the purine/pyrimidine phosphoribosyltransferase family. PyrE subfamily. In terms of assembly, homodimer. Requires Mg(2+) as cofactor.

It carries out the reaction orotidine 5'-phosphate + diphosphate = orotate + 5-phospho-alpha-D-ribose 1-diphosphate. It functions in the pathway pyrimidine metabolism; UMP biosynthesis via de novo pathway; UMP from orotate: step 1/2. In terms of biological role, catalyzes the transfer of a ribosyl phosphate group from 5-phosphoribose 1-diphosphate to orotate, leading to the formation of orotidine monophosphate (OMP). This chain is Orotate phosphoribosyltransferase, found in Salmonella choleraesuis (strain SC-B67).